We begin with the raw amino-acid sequence, 405 residues long: Probable tRNA sulfurtransferase (405 aa).

The region spanning 60–165 (DKVMGRLKLV…LNGIFLSSET (106 aa)) is the THUMP domain. Residues 183 to 184 (ML), 208 to 209 (HF), arginine 265, glycine 287, and glutamine 296 contribute to the ATP site.

Belongs to the ThiI family.

It is found in the cytoplasm. It carries out the reaction [ThiI sulfur-carrier protein]-S-sulfanyl-L-cysteine + a uridine in tRNA + 2 reduced [2Fe-2S]-[ferredoxin] + ATP + H(+) = [ThiI sulfur-carrier protein]-L-cysteine + a 4-thiouridine in tRNA + 2 oxidized [2Fe-2S]-[ferredoxin] + AMP + diphosphate. It catalyses the reaction [ThiS sulfur-carrier protein]-C-terminal Gly-Gly-AMP + S-sulfanyl-L-cysteinyl-[cysteine desulfurase] + AH2 = [ThiS sulfur-carrier protein]-C-terminal-Gly-aminoethanethioate + L-cysteinyl-[cysteine desulfurase] + A + AMP + 2 H(+). It participates in cofactor biosynthesis; thiamine diphosphate biosynthesis. Its function is as follows. Catalyzes the ATP-dependent transfer of a sulfur to tRNA to produce 4-thiouridine in position 8 of tRNAs, which functions as a near-UV photosensor. Also catalyzes the transfer of sulfur to the sulfur carrier protein ThiS, forming ThiS-thiocarboxylate. This is a step in the synthesis of thiazole, in the thiamine biosynthesis pathway. The sulfur is donated as persulfide by IscS. This chain is Probable tRNA sulfurtransferase, found in Lactiplantibacillus plantarum (strain ATCC BAA-793 / NCIMB 8826 / WCFS1) (Lactobacillus plantarum).